Here is a 465-residue protein sequence, read N- to C-terminus: Probable Xaa-Pro aminopeptidase pepP (465 aa).

The Mn(2+) site is built by Asp261, Asp272, Glu395, and Glu435.

Belongs to the peptidase M24B family. The cofactor is Mn(2+).

It carries out the reaction Release of any N-terminal amino acid, including proline, that is linked to proline, even from a dipeptide or tripeptide.. Functionally, catalyzes the removal of a penultimate prolyl residue from the N-termini of peptides. The protein is Probable Xaa-Pro aminopeptidase pepP (pepP) of Talaromyces marneffei (strain ATCC 18224 / CBS 334.59 / QM 7333) (Penicillium marneffei).